The primary structure comprises 213 residues: Pyridoxine/pyridoxamine 5'-phosphate oxidase 2 (213 aa).

Residues 9–12 (RQRY) and Lys67 each bind substrate. Residues 62-67 (RTVLLK), 77-78 (FT), Lys84, and Gln106 each bind FMN. Residues Tyr124, Arg128, and Ser132 each contribute to the substrate site. FMN is bound by residues 141-142 (QS) and Trp186. 192–194 (RLH) is a binding site for substrate. Arg196 contacts FMN.

Belongs to the pyridoxamine 5'-phosphate oxidase family. As to quaternary structure, homodimer. FMN serves as cofactor.

It carries out the reaction pyridoxamine 5'-phosphate + O2 + H2O = pyridoxal 5'-phosphate + H2O2 + NH4(+). The catalysed reaction is pyridoxine 5'-phosphate + O2 = pyridoxal 5'-phosphate + H2O2. Its pathway is cofactor metabolism; pyridoxal 5'-phosphate salvage; pyridoxal 5'-phosphate from pyridoxamine 5'-phosphate: step 1/1. The protein operates within cofactor metabolism; pyridoxal 5'-phosphate salvage; pyridoxal 5'-phosphate from pyridoxine 5'-phosphate: step 1/1. In terms of biological role, catalyzes the oxidation of either pyridoxine 5'-phosphate (PNP) or pyridoxamine 5'-phosphate (PMP) into pyridoxal 5'-phosphate (PLP). In Hydrogenovibrio crunogenus (strain DSM 25203 / XCL-2) (Thiomicrospira crunogena), this protein is Pyridoxine/pyridoxamine 5'-phosphate oxidase 2.